The sequence spans 911 residues: Valine--tRNA ligase (911 aa).

The 'HIGH' region motif lies at 53-63 (PNVTGTLHLGH). Residues 533 to 537 (KMSKS) carry the 'KMSKS' region motif. Lysine 536 contacts ATP. A coiled-coil region spans residues 845–910 (KEIERLTKEL…NRLAMLRSMQ (66 aa)).

This sequence belongs to the class-I aminoacyl-tRNA synthetase family. ValS type 1 subfamily. Monomer.

It is found in the cytoplasm. The enzyme catalyses tRNA(Val) + L-valine + ATP = L-valyl-tRNA(Val) + AMP + diphosphate. Catalyzes the attachment of valine to tRNA(Val). As ValRS can inadvertently accommodate and process structurally similar amino acids such as threonine, to avoid such errors, it has a 'posttransfer' editing activity that hydrolyzes mischarged Thr-tRNA(Val) in a tRNA-dependent manner. The polypeptide is Valine--tRNA ligase (Symbiobacterium thermophilum (strain DSM 24528 / JCM 14929 / IAM 14863 / T)).